The following is a 364-amino-acid chain: Aminomethyltransferase (364 aa).

Belongs to the GcvT family. As to quaternary structure, the glycine cleavage system is composed of four proteins: P, T, L and H.

The catalysed reaction is N(6)-[(R)-S(8)-aminomethyldihydrolipoyl]-L-lysyl-[protein] + (6S)-5,6,7,8-tetrahydrofolate = N(6)-[(R)-dihydrolipoyl]-L-lysyl-[protein] + (6R)-5,10-methylene-5,6,7,8-tetrahydrofolate + NH4(+). Functionally, the glycine cleavage system catalyzes the degradation of glycine. This Escherichia coli (strain 55989 / EAEC) protein is Aminomethyltransferase.